Here is a 494-residue protein sequence, read N- to C-terminus: Metal cation symporter ZIP14 (494 aa).

Residues 1 to 34 (MTLRRASGCRQLTLTIGLALTLGLLQWPIGDVRG) form the signal peptide. At 35–152 (QDGASPAQVL…PTEAEVWGYG (118 aa)) the chain is on the extracellular side. A helical transmembrane segment spans residues 153–173 (LLCVTVISLCSLVGASVVPFM). The Cytoplasmic portion of the chain corresponds to 174–181 (RKTFYKRL). A helical membrane pass occupies residues 182–202 (LLYFIALAIGTLYSNALFQLI). Topologically, residues 203–219 (PEAFGFDPMEDYYVPKS) are extracellular. A helical membrane pass occupies residues 220 to 240 (AVVFGGFYLFFFTEKILKMIL). Topologically, residues 241-397 (KPKDTGGHGH…LLNAGMSIQQ (157 aa)) are cytoplasmic. Residues 248 to 255 (HGHGHSHF) carry the HHHGHXHX-motif motif. The XEXPHE-motif signature appears at 376–381 (EEFPHE). A helical membrane pass occupies residues 398–418 (ALFFNFLSACCCYLGMGFGIL). Over 419–426 (AGNNFSPN) the chain is Extracellular. Residues 427–447 (WIFALAGGMFLYIALADMFPE) traverse the membrane as a helical segment. Topologically, residues 448–462 (MNEVSREEEEAGGSG) are cytoplasmic. The helical transmembrane segment at 463 to 483 (FLLTFALQNAGLLTGFAIMLV) threads the bilayer. Residues 484 to 494 (LTIYSGQIQLG) are Extracellular-facing.

It belongs to the ZIP transporter (TC 2.A.5) family. In terms of assembly, homotrimer.

It is found in the cell membrane. The protein resides in the apical cell membrane. Its subcellular location is the basolateral cell membrane. The protein localises to the early endosome membrane. It localises to the late endosome membrane. It is found in the lysosome membrane. It carries out the reaction Zn(2+)(out) + 2 hydrogencarbonate(out) = Zn(2+)(in) + 2 hydrogencarbonate(in). It catalyses the reaction Mn(2+)(out) + 2 hydrogencarbonate(out) = Mn(2+)(in) + 2 hydrogencarbonate(in). The catalysed reaction is Fe(2+)(out) + 2 hydrogencarbonate(out) = Fe(2+)(in) + 2 hydrogencarbonate(in). The enzyme catalyses Cd(2+)(out) + 2 hydrogencarbonate(out) = Cd(2+)(in) + 2 hydrogencarbonate(in). In terms of biological role, broad-scope metal ion transporter with a preference for zinc uptake. Also mediates cellular uptake of nontransferrin-bound iron. Functionally, electroneutral transporter of the plasma membrane mediating the cellular uptake of the divalent metal cations zinc, manganese and iron that are important for tissue homeostasis, metabolism, development and immunity. Functions as an energy-dependent symporter, transporting through the membranes an electroneutral complex composed of a divalent metal cation and two bicarbonate anions. Beside these endogenous cellular substrates, can also import cadmium a non-essential metal which is cytotoxic and carcinogenic. This Danio rerio (Zebrafish) protein is Metal cation symporter ZIP14.